A 378-amino-acid chain; its full sequence is 8-demethyl-8-alpha-L-rhamnosyl tetracenomycin-C 2'-O-methyltransferase (378 aa).

S-adenosyl-L-methionine contacts are provided by residues E195–Y201, S210, D227, D245–Q246, and D268. Residue D268 coordinates Mg(2+). Residue H271 is the Proton acceptor of the active site. 2 residues coordinate Mg(2+): E296 and D297.

It belongs to the methyltransferase OleY/MycE family. The cofactor is Mg(2+).

It carries out the reaction 8-demethyl-8-alpha-L-rhamnosyl-tetracenomycin C + S-adenosyl-L-methionine = 8-demethyl-8-(2-O-methyl-alpha-L-rhamnosyl)-tetracenomycin C + S-adenosyl-L-homocysteine + H(+). The protein operates within antibiotic biosynthesis. Functionally, O-methyltransferase involved in the biosynthesis of the permethylated L-rhamnose moiety of elloramycin, an antitumor polyketide. Mediates the methylation of the hydroxy groups at the 2'-position after the sugar moiety has been attached to the aglycon. This chain is 8-demethyl-8-alpha-L-rhamnosyl tetracenomycin-C 2'-O-methyltransferase, found in Streptomyces olivaceus.